The following is a 769-amino-acid chain: 5-methyltetrahydropteroyltriglutamate--homocysteine methyltransferase (769 aa).

Residues 16–19 and Lys121 contribute to the 5-methyltetrahydropteroyltri-L-glutamate site; that span reads RELK. The tract at residues 415–450 is disordered; it reads SMTERDSPHSSRSPLQREALDLPTLPTTTIGSFPQT. The segment covering 439-449 has biased composition (polar residues); sequence LPTTTIGSFPQ. L-homocysteine is bound by residues 444 to 446 and Glu497; that span reads IGS. Residues 444–446 and Glu497 contribute to the L-methionine site; that span reads IGS. Residues 528–529 and Trp574 contribute to the 5-methyltetrahydropteroyltri-L-glutamate site; that span reads RC. Asp612 lines the L-homocysteine pocket. Asp612 contributes to the L-methionine binding site. A 5-methyltetrahydropteroyltri-L-glutamate-binding site is contributed by Glu618. Zn(2+)-binding residues include His654, Cys656, and Glu678. The active-site Proton donor is His707. Cys739 is a binding site for Zn(2+).

This sequence belongs to the vitamin-B12 independent methionine synthase family. Zn(2+) is required as a cofactor.

It carries out the reaction 5-methyltetrahydropteroyltri-L-glutamate + L-homocysteine = tetrahydropteroyltri-L-glutamate + L-methionine. It functions in the pathway amino-acid biosynthesis; L-methionine biosynthesis via de novo pathway; L-methionine from L-homocysteine (MetE route): step 1/1. Its function is as follows. Catalyzes the transfer of a methyl group from 5-methyltetrahydrofolate to homocysteine resulting in methionine formation. The polypeptide is 5-methyltetrahydropteroyltriglutamate--homocysteine methyltransferase (Salinibacter ruber (strain DSM 13855 / M31)).